A 622-amino-acid chain; its full sequence is Chaperone protein HscA homolog (622 aa).

Belongs to the heat shock protein 70 family.

In terms of biological role, chaperone involved in the maturation of iron-sulfur cluster-containing proteins. Has a low intrinsic ATPase activity which is markedly stimulated by HscB. This is Chaperone protein HscA homolog from Acidovorax sp. (strain JS42).